Consider the following 143-residue polypeptide: 1,4-dihydroxy-2-naphthoyl-CoA hydrolase (143 aa).

Aspartate 14 is a catalytic residue.

This sequence belongs to the 4-hydroxybenzoyl-CoA thioesterase family. DHNA-CoA hydrolase subfamily.

The catalysed reaction is 1,4-dihydroxy-2-naphthoyl-CoA + H2O = 1,4-dihydroxy-2-naphthoate + CoA + H(+). It functions in the pathway cofactor biosynthesis; phylloquinone biosynthesis. The protein operates within quinol/quinone metabolism; 1,4-dihydroxy-2-naphthoate biosynthesis; 1,4-dihydroxy-2-naphthoate from chorismate: step 7/7. Catalyzes the hydrolysis of 1,4-dihydroxy-2-naphthoyl-CoA (DHNA-CoA) to 1,4-dihydroxy-2-naphthoate (DHNA), a reaction involved in phylloquinone (vitamin K1) biosynthesis. The chain is 1,4-dihydroxy-2-naphthoyl-CoA hydrolase from Gloeothece citriformis (strain PCC 7424) (Cyanothece sp. (strain PCC 7424)).